Reading from the N-terminus, the 123-residue chain is Small ribosomal subunit protein uS12 (123 aa).

Residue aspartate 89 is modified to 3-methylthioaspartic acid. A disordered region spans residues 101-123; that stretch reads TLDTSGVSDRRQSRSKYGAKRPK. Basic residues predominate over residues 113-123; it reads SRSKYGAKRPK.

It belongs to the universal ribosomal protein uS12 family. Part of the 30S ribosomal subunit. Contacts proteins S8 and S17. May interact with IF1 in the 30S initiation complex.

Its function is as follows. With S4 and S5 plays an important role in translational accuracy. In terms of biological role, interacts with and stabilizes bases of the 16S rRNA that are involved in tRNA selection in the A site and with the mRNA backbone. Located at the interface of the 30S and 50S subunits, it traverses the body of the 30S subunit contacting proteins on the other side and probably holding the rRNA structure together. The combined cluster of proteins S8, S12 and S17 appears to hold together the shoulder and platform of the 30S subunit. This is Small ribosomal subunit protein uS12 from Solidesulfovibrio magneticus (strain ATCC 700980 / DSM 13731 / RS-1) (Desulfovibrio magneticus).